We begin with the raw amino-acid sequence, 163 residues long: Probable phosphotransferase enzyme IIB component M6_Spy0801 (163 aa).

Positions 1–163 constitute a PTS EIIB type-4 domain; sequence MITQIRVDDR…TKVHLSQLVN (163 aa). His-13 serves as the catalytic Pros-phosphohistidine intermediate.

The protein localises to the cytoplasm. The phosphoenolpyruvate-dependent sugar phosphotransferase system (sugar PTS), a major carbohydrate active -transport system, catalyzes the phosphorylation of incoming sugar substrates concomitantly with their translocation across the cell membrane. This chain is Probable phosphotransferase enzyme IIB component M6_Spy0801, found in Streptococcus pyogenes serotype M6 (strain ATCC BAA-946 / MGAS10394).